The following is a 194-amino-acid chain: Imidazoleglycerol-phosphate dehydratase (194 aa).

The protein belongs to the imidazoleglycerol-phosphate dehydratase family.

Its subcellular location is the cytoplasm. The catalysed reaction is D-erythro-1-(imidazol-4-yl)glycerol 3-phosphate = 3-(imidazol-4-yl)-2-oxopropyl phosphate + H2O. It functions in the pathway amino-acid biosynthesis; L-histidine biosynthesis; L-histidine from 5-phospho-alpha-D-ribose 1-diphosphate: step 6/9. The sequence is that of Imidazoleglycerol-phosphate dehydratase from Streptococcus sanguinis (strain SK36).